The chain runs to 349 residues: Twinfilin-2 (349 aa).

Ala-2 is modified (N-acetylalanine). 2 consecutive ADF-H domains span residues 4 to 139 (QTGI…KHLS) and 177 to 313 (GLAF…DEVH). N6-acetyllysine is present on Lys-14. A Phosphotyrosine modification is found at Tyr-309. The disordered stretch occupies residues 322-349 (AFAKPKGPGGKRGHKRLIRGPGENGDDS). The span at 330-339 (GGKRGHKRLI) shows a compositional bias: basic residues. Ser-349 is modified (phosphoserine).

Belongs to the actin-binding proteins ADF family. Twinfilin subfamily. Interacts with G-actin; ADP-actin form and capping protein (CP). May also be able to interact with TWF1 and phosphoinositides, PI(4,5)P2. When bound to PI(4,5)P2, it is down-regulated. Interacts with MYO7A. In vitro, phosphorylated by PRKCZ, CK2 and SRC. As to expression, ubiquitously expressed (at protein level).

The protein resides in the cytoplasm. Its subcellular location is the cytoskeleton. It is found in the perinuclear region. It localises to the cell projection. The protein localises to the stereocilium. In terms of biological role, actin-binding protein involved in motile and morphological processes. Inhibits actin polymerization, likely by sequestering G-actin. By capping the barbed ends of filaments, it also regulates motility. Seems to play an important role in clathrin-mediated endocytosis and distribution of endocytic organelles. May play a role in regulating the mature length of the middle and short rows of stereocilia. The sequence is that of Twinfilin-2 (TWF2) from Homo sapiens (Human).